Here is a 295-residue protein sequence, read N- to C-terminus: Ethanolamine ammonia-lyase small subunit (295 aa).

2 residues coordinate adenosylcob(III)alamin: V208 and E229.

The protein belongs to the EutC family. As to quaternary structure, the basic unit is a heterodimer which dimerizes to form tetramers. The heterotetramers trimerize; 6 large subunits form a core ring with 6 small subunits projecting outwards. Adenosylcob(III)alamin serves as cofactor.

It is found in the bacterial microcompartment. The catalysed reaction is ethanolamine = acetaldehyde + NH4(+). It functions in the pathway amine and polyamine degradation; ethanolamine degradation. In terms of biological role, catalyzes the deamination of various vicinal amino-alcohols to oxo compounds. Allows this organism to utilize ethanolamine as the sole source of nitrogen and carbon in the presence of external vitamin B12. The protein is Ethanolamine ammonia-lyase small subunit of Fusobacterium nucleatum subsp. nucleatum (strain ATCC 25586 / DSM 15643 / BCRC 10681 / CIP 101130 / JCM 8532 / KCTC 2640 / LMG 13131 / VPI 4355).